Here is a 166-residue protein sequence, read N- to C-terminus: CDP-archaeol synthase (166 aa).

Helical transmembrane passes span 7–27 (LLLS…GPFI), 55–75 (LIVA…FFTA), 78–98 (TLIS…GAFI), 116–136 (LDFV…ITWY), and 138–158 (FLFI…VAYL).

It belongs to the CDP-archaeol synthase family. Mg(2+) serves as cofactor.

The protein localises to the cell membrane. The catalysed reaction is 2,3-bis-O-(geranylgeranyl)-sn-glycerol 1-phosphate + CTP + H(+) = CDP-2,3-bis-O-(geranylgeranyl)-sn-glycerol + diphosphate. Its pathway is membrane lipid metabolism; glycerophospholipid metabolism. In terms of biological role, catalyzes the formation of CDP-2,3-bis-(O-geranylgeranyl)-sn-glycerol (CDP-archaeol) from 2,3-bis-(O-geranylgeranyl)-sn-glycerol 1-phosphate (DGGGP) and CTP. This reaction is the third ether-bond-formation step in the biosynthesis of archaeal membrane lipids. In Saccharolobus islandicus (strain L.S.2.15 / Lassen #1) (Sulfolobus islandicus), this protein is CDP-archaeol synthase.